The following is a 1332-amino-acid chain: Elongator complex protein 1 (1332 aa).

Serine 471, serine 804, serine 867, serine 1171, and serine 1174 each carry phosphoserine. The segment at 885 to 1332 (VDVNELYDHS…RTQWKLSLLD (448 aa)) is mediates dimerization. Positions 1150 to 1208 (QAGLDDEVPHGQESDLFSETSSVVSGSEMSGKYSHSNSRISARSSKNRRKAERKKHSLK) are disordered. The span at 1164–1177 (DLFSETSSVVSGSE) shows a compositional bias: polar residues. The tract at residues 1191–1209 (ARSSKNRRKAERKKHSLKE) is required for binding to tRNA. The segment covering 1194-1206 (SKNRRKAERKKHS) has biased composition (basic residues).

Belongs to the ELP1/IKA1 family. In terms of assembly, homodimer; dimerization promotes ELP1 stability and elongator complex formation. Component of the elongator complex which consists of ELP1, ELP2, ELP3, ELP4, ELP5 and ELP6. Interacts preferentially with MAP3K14/NIK followed by IKK-alpha and IKK-beta.

The protein localises to the cytoplasm. It is found in the nucleus. It functions in the pathway tRNA modification; 5-methoxycarbonylmethyl-2-thiouridine-tRNA biosynthesis. Functionally, component of the elongator complex which is required for multiple tRNA modifications, including mcm5U (5-methoxycarbonylmethyl uridine), mcm5s2U (5-methoxycarbonylmethyl-2-thiouridine), and ncm5U (5-carbamoylmethyl uridine). The elongator complex catalyzes the formation of carboxymethyluridine in the wobble base at position 34 in tRNAs. Regulates the migration and branching of projection neurons in the developing cerebral cortex, through a process depending on alpha-tubulin acetylation. ELP1 binds to tRNA, mediating interaction of the elongator complex with tRNA. May act as a scaffold protein that assembles active IKK-MAP3K14 complexes (IKKA, IKKB and MAP3K14/NIK). The polypeptide is Elongator complex protein 1 (Homo sapiens (Human)).